An 87-amino-acid polypeptide reads, in one-letter code: Sodium channel neurotoxin MeuNaTxalpha-5* (87 aa).

The N-terminal stretch at 1–19 (MNYLILISFALLVITGVES) is a signal peptide. Residues 21–85 (RDAYIAKPHN…VPIRIPGKCH (65 aa)) enclose the LCN-type CS-alpha/beta domain. 4 disulfide bridges follow: Cys31–Cys84, Cys35–Cys57, Cys43–Cys67, and Cys47–Cys69. The propeptide at 86–87 (RR) is removed by a carboxypeptidase.

This sequence belongs to the long (4 C-C) scorpion toxin superfamily. Sodium channel inhibitor family. Alpha subfamily. As to expression, expressed by the venom gland.

Its subcellular location is the secreted. In terms of biological role, alpha toxins bind voltage-independently at site-3 of sodium channels (Nav) and inhibit the inactivation of the activated channels, thereby blocking neuronal transmission. This toxin inhibits inactivation of Nav1.6/SCN8A (EC(50)=790 nM) and drosophila DmNav1 (EC(50)=280 nM). The toxin (1 uM) does not significantly shift the midpoint of activation at the two channels, but induces a significant depolarizing shift in the V(1/2) of inactivation of the channels. Has antimicrobial activity. The protein is Sodium channel neurotoxin MeuNaTxalpha-5* of Mesobuthus eupeus (Lesser Asian scorpion).